Consider the following 371-residue polypeptide: MAKIMIAMSGGVDSSLAAALLHEAGHDVTGVTLHLWEGDDDRLAESLCCSQEMTESARRVCAQLGIPYYVFNYQREFRRSVIEYFLREYASGFTPNPCLECNREIKFRALLARARALGFDYVATGHYARIRVDKTPADHSASPSPNGAQRAVYRLLRAVDEEKDQSYMLYMLGQDDLARLMFPIGEYTKAEVRALAAARGLASANRPESQDICFVPGGDYRNLLREERPDALRPGPILDLEGREVGRHQGLPLYTIGQRRGLGIATGQPMYVMALDVARNAVIVGPESALRRTTLRAERVTFVSGSWPEAPFDCLAQIRAHADAVPARVTPVEPERVEVRFEHPQRAITPGQAIVFYDGAVVLGGGRIARD.

ATP is bound by residues 7 to 14 and Leu-33; that span reads AMSGGVDS. The active-site Nucleophile is Cys-101. An intrachain disulfide couples Cys-101 to Cys-213. An ATP-binding site is contributed by Gly-125. An interaction with tRNA region spans residues 163 to 165; that stretch reads KDQ. The Cysteine persulfide intermediate role is filled by Cys-213.

The protein belongs to the MnmA/TRMU family.

The protein localises to the cytoplasm. It carries out the reaction S-sulfanyl-L-cysteinyl-[protein] + uridine(34) in tRNA + AH2 + ATP = 2-thiouridine(34) in tRNA + L-cysteinyl-[protein] + A + AMP + diphosphate + H(+). Its function is as follows. Catalyzes the 2-thiolation of uridine at the wobble position (U34) of tRNA, leading to the formation of s(2)U34. This chain is tRNA-specific 2-thiouridylase MnmA, found in Roseiflexus castenholzii (strain DSM 13941 / HLO8).